A 294-amino-acid polypeptide reads, in one-letter code: Probable endonuclease 4 (294 aa).

Zn(2+) contacts are provided by His78, His118, Glu155, Asp189, His192, His226, Asp239, His241, and Glu271.

This sequence belongs to the AP endonuclease 2 family. It depends on Zn(2+) as a cofactor.

It catalyses the reaction Endonucleolytic cleavage to 5'-phosphooligonucleotide end-products.. Endonuclease IV plays a role in DNA repair. It cleaves phosphodiester bonds at apurinic or apyrimidinic (AP) sites, generating a 3'-hydroxyl group and a 5'-terminal sugar phosphate. The chain is Probable endonuclease 4 from Oleidesulfovibrio alaskensis (strain ATCC BAA-1058 / DSM 17464 / G20) (Desulfovibrio alaskensis).